We begin with the raw amino-acid sequence, 74 residues long: U2-sicaritoxin-Sdo1a (74 aa).

The N-terminal stretch at 1 to 20 is a signal peptide; the sequence is MKLSFCFFLCAIVLFSFAEA. A propeptide spanning residues 21–39 is cleaved from the precursor; sequence RINPNQLKRLRELVRDDEP. 3 disulfide bridges follow: Cys42-Cys59, Cys49-Cys62, and Cys58-Cys71.

In terms of tissue distribution, expressed by the venom gland.

The protein localises to the secreted. The protein is U2-sicaritoxin-Sdo1a of Hexophthalma dolichocephala (Afrotropical spider).